The sequence spans 536 residues: GPI alpha-1,2-mannosyltransferase 3 (536 aa).

Residue Asn-15 is glycosylated (N-linked (GlcNAc...) asparagine). 2 helical membrane passes run 40-60 (IFGI…CVLV) and 118-138 (VYLL…YADV). The N-linked (GlcNAc...) asparagine glycan is linked to Asn-176. The next 6 helical transmembrane spans lie at 206-226 (LVSL…PLIF), 243-263 (YFPI…FFYG), 297-317 (GLPV…LLST), 322-342 (ILLL…HKEF), 344-364 (FIYP…AKLQ), and 369-389 (AAAG…GLVH). Asn-467 carries N-linked (GlcNAc...) asparagine glycosylation.

Belongs to the glycosyltransferase 22 family. PIGB subfamily.

It localises to the endoplasmic reticulum membrane. Its pathway is glycolipid biosynthesis; glycosylphosphatidylinositol-anchor biosynthesis. Alpha-1,2-mannosyltransferase that catalyzes the transfer of the third mannose, via an alpha-1,2 bond, from a dolichol-phosphate-mannose (Dol-P-Man) to an alpha-D-Man-(1-&gt;6)-2-PEtn-alpha-D-Man-(1-&gt;4)-alpha-D-GlcN-(1-&gt;6)-(1-radyl,2-acyl-sn-glycero-3-phospho)-2-acyl-inositol intermediate to generate an alpha-D-Man-(1-&gt;2)-alpha-D-Man-(1-&gt;6)-2-PEtn-alpha-D-Man-(1-&gt;4)-alpha-D-GlcN-(1-&gt;6)-(1-radyl,2-acyl-sn-glycero-3-phospho)-2-acyl-inositol (also termed H6) and participates in the nineth step of the glycosylphosphatidylinositol-anchor biosynthesis. May also add the third mannose to an alpha-D-Man-(1-&gt;6)-alpha-D-Man-(1-&gt;4)-alpha-D-GlcN-(1-&gt;6)-(1-radyl,2-acyl-sn-glycero-3-phospho)-2-acyl-inositol (also termed H3) intermediate generating an alpha-D-Man-(1-&gt;2)-alpha-D-Man-(1-&gt;6)-alpha-D-Man-(1-&gt;4)-alpha-D-GlcN-(1-&gt;6)-(1-radyl,2-acyl-sn-glycero-3-phospho)-2-acyl-inositol (also termed H4). The polypeptide is GPI alpha-1,2-mannosyltransferase 3 (Danio rerio (Zebrafish)).